The primary structure comprises 485 residues: Protein adenylyltransferase Fic (485 aa).

A helical membrane pass occupies residues Tyr21–Ser43. TPR repeat units lie at residues Ala107–His140 and Pro141–Asn175. Positions Ser232 to Gly237 match the Inhibitory (S/T)XXXE(G/N) motif motif. Residues Glu236 and Val317 to His320 each bind ATP. In terms of domain architecture, Fido spans Ile286 to Asp421. His364 is an active-site residue. ATP contacts are provided by residues Asp368–Arg375, Tyr400–Tyr401, and Asn408.

This sequence belongs to the fic family. In terms of assembly, homodimer.

It is found in the membrane. It carries out the reaction L-tyrosyl-[protein] + ATP = O-(5'-adenylyl)-L-tyrosyl-[protein] + diphosphate. It catalyses the reaction L-threonyl-[protein] + ATP = 3-O-(5'-adenylyl)-L-threonyl-[protein] + diphosphate. The enzyme catalyses 3-O-(5'-adenylyl)-L-threonyl-[protein] + H2O = L-threonyl-[protein] + AMP + H(+). Its activity is regulated as follows. The side chain of Glu-236 determines which of the two opposing activities (AMPylase or de-AMPylase) will take place. In response to endoplasmic reticulum stress, mediates de-AMPylase activity. Adenylyltransferase activity is inhibited by the inhibitory helix present at the N-terminus: Glu-236 binds ATP and competes with ATP-binding at Arg-375, thereby preventing adenylyltransferase activity. In unstressed cells, disengagement of Glu-236 promotes adenylyltransferase activity. Activation dissociates ATP-binding from Glu-236, allowing ordered binding of the entire ATP moiety with the alpha-phosphate in an orientation that is productive for accepting an incoming target hydroxyl side chain. In terms of biological role, protein that can both mediate the addition of adenosine 5'-monophosphate (AMP) to specific residues of target proteins (AMPylation), and the removal of the same modification from target proteins (de-AMPylation), depending on the context. The side chain of Glu-236 determines which of the two opposing activities (AMPylase or de-AMPylase) will take place. Acts as a key regulator of the unfolded protein response (UPR) by mediating AMPylation or de-AMPylation of Hsc70-3/BiP. In unstressed cells, acts as an adenylyltransferase by mediating AMPylation of Hsc70-3/BiP at 'Thr-518', thereby inactivating it. In response to endoplasmic reticulum stress, acts as a phosphodiesterase by mediating removal of ATP (de-AMPylation) from Hsc70-3/BiP at 'Thr-518', leading to restore HSPA5/BiP activity. This Drosophila virilis (Fruit fly) protein is Protein adenylyltransferase Fic.